A 218-amino-acid chain; its full sequence is Large ribosomal subunit protein uL1 (218 aa).

This sequence belongs to the universal ribosomal protein uL1 family. As to quaternary structure, part of the 50S ribosomal subunit.

Its function is as follows. Probably involved in E site tRNA release. Binds directly to 23S rRNA. In terms of biological role, protein L1 is also a translational repressor protein, it controls the translation of its operon by binding to its mRNA. The chain is Large ribosomal subunit protein uL1 from Saccharolobus solfataricus (strain ATCC 35092 / DSM 1617 / JCM 11322 / P2) (Sulfolobus solfataricus).